Reading from the N-terminus, the 220-residue chain is Aklanonic acid methyltransferase DauC (220 aa).

It belongs to the methyltransferase superfamily. DnrC family. As to quaternary structure, homodimer.

It catalyses the reaction aklanonate + S-adenosyl-L-methionine = methyl aklanonate + S-adenosyl-L-homocysteine. It functions in the pathway antibiotic biosynthesis; daunorubicin biosynthesis. The protein operates within antibiotic biosynthesis; carminomycin biosynthesis. Its pathway is antibiotic biosynthesis; rhodomycin biosynthesis. It participates in antibiotic biosynthesis; aclacinomycin biosynthesis. Functionally, involved in the biosynthesis of aklavinone which is an important precursor common to the formation of the clinically significant anthracyclines such as carminomycin, daunorubicin (daunomycin), rhodomycin, aclacinomycin T (aklavin) and aclacinomycin A (aclarubicin). These compounds are aromatic polyketide antibiotics that exhibit high cytotoxicity and are widely applied in the chemotherapy of a variety of cancers. Catalyzes the methyl esterification of aklanonic acid to yield aklanonic acid methyl ester. The protein is Aklanonic acid methyltransferase DauC (dauC) of Streptomyces sp. (strain C5).